We begin with the raw amino-acid sequence, 108 residues long: UPF0235 protein RB8260 (108 aa).

This sequence belongs to the UPF0235 family.

This is UPF0235 protein RB8260 from Rhodopirellula baltica (strain DSM 10527 / NCIMB 13988 / SH1).